A 214-amino-acid chain; its full sequence is ATP phosphoribosyltransferase (214 aa).

Belongs to the ATP phosphoribosyltransferase family. Short subfamily. As to quaternary structure, heteromultimer composed of HisG and HisZ subunits.

It is found in the cytoplasm. The enzyme catalyses 1-(5-phospho-beta-D-ribosyl)-ATP + diphosphate = 5-phospho-alpha-D-ribose 1-diphosphate + ATP. It functions in the pathway amino-acid biosynthesis; L-histidine biosynthesis; L-histidine from 5-phospho-alpha-D-ribose 1-diphosphate: step 1/9. Its function is as follows. Catalyzes the condensation of ATP and 5-phosphoribose 1-diphosphate to form N'-(5'-phosphoribosyl)-ATP (PR-ATP). Has a crucial role in the pathway because the rate of histidine biosynthesis seems to be controlled primarily by regulation of HisG enzymatic activity. This Methylibium petroleiphilum (strain ATCC BAA-1232 / LMG 22953 / PM1) protein is ATP phosphoribosyltransferase.